We begin with the raw amino-acid sequence, 361 residues long: Inhibin alpha chain (361 aa).

A signal peptide spans 1–21 (MLPLLLPLQLLLLMVMKGGHG). A propeptide spanning residues 22–64 (CQGPELDRELVLAKVRALVLDALGPPNASKDGGKPVAQRLTRR) is cleaved from the precursor. The segment at 45-82 (GPPNASKDGGKPVAQRLTRRHAHTGGSTRRSMENEDED) is disordered. Residues Asn-48, Asn-144, and Asn-266 are each glycosylated (N-linked (GlcNAc...) asparagine). The propeptide at 65–230 (HAHTGGSTRR…PPSVGERARR (166 aa)) is inhibin alpha N-terminal region. Intrachain disulfides connect Cys-260/Cys-323, Cys-289/Cys-358, and Cys-293/Cys-360.

Belongs to the TGF-beta family. In terms of assembly, dimeric, linked by one or more disulfide bonds. Activin B is a dimer of alpha and beta-B. Inhibin A is a dimer of alpha and beta-A. Inhibin B is a dimer of alpha and beta-B. Interacts with TGFBR3L; this interaction regulates female fertility. In terms of processing, proteolytic processing yields a number of bioactive forms, consisting either solely of the mature alpha chain, of the most N-terminal propeptide linked through a disulfide bond to the mature alpha chain, or of the entire proprotein.

It localises to the secreted. In terms of biological role, inhibins and activins inhibit and activate, respectively, the secretion of follitropin by the pituitary gland. Inhibins/activins are involved in regulating a number of diverse functions such as hypothalamic and pituitary hormone secretion, gonadal hormone secretion, germ cell development and maturation, erythroid differentiation, insulin secretion, nerve cell survival, embryonic axial development or bone growth, depending on their subunit composition. Inhibins appear to oppose the functions of activins. Its function is as follows. Inhibin A is a dimer of alpha/INHA and beta-A/INHBA that functions as a feedback regulator in the hypothalamic-pituitary-gonadal (HPG) axis. Inhibits the secretion of FSH from the anterior pituitary gland by acting on pituitary gonadotrope cells. Antagonizes activin A by binding to the proteoglycan, betaglycan, and forming a stable complex with and, thereby, sequestering type II activin receptors while excluding type I receptor. Functionally, inhibin B is a dimer of alpha and beta-B that plays a crucial role in the regulation of the reproductive system by inhibiting the secretion of follicle-stimulating hormone (FSH) from the anterior pituitary gland. Thereby, maintains reproductive homeostasis in both males and females. Acts as a more potent suppressor of FSH release than inhibin A. Functions as competitive receptor antagonist binding activin type II receptors with high affinity in the presence of the TGF-beta type III coreceptor/TGFBR3L. The sequence is that of Inhibin alpha chain (INHA) from Trichosurus vulpecula (Brush-tailed possum).